The sequence spans 260 residues: Phosphate import ATP-binding protein PstB (260 aa).

In terms of domain architecture, ABC transporter spans 14 to 255; that stretch reads LQIRNLDFFY…PGKKQTEDYI (242 aa). 46 to 53 contacts ATP; it reads GPSGCGKS.

This sequence belongs to the ABC transporter superfamily. Phosphate importer (TC 3.A.1.7) family. As to quaternary structure, the complex is composed of two ATP-binding proteins (PstB), two transmembrane proteins (PstC and PstA) and a solute-binding protein (PstS).

It is found in the cell inner membrane. It carries out the reaction phosphate(out) + ATP + H2O = ADP + 2 phosphate(in) + H(+). In terms of biological role, part of the ABC transporter complex PstSACB involved in phosphate import. Responsible for energy coupling to the transport system. This chain is Phosphate import ATP-binding protein PstB, found in Thiobacillus denitrificans (strain ATCC 25259 / T1).